A 655-amino-acid chain; its full sequence is FYVE, RhoGEF and PH domain-containing protein 2 (655 aa).

Phosphoserine is present on residues serine 10, serine 39, and serine 47. Disordered stretches follow at residues 21 to 52 (NRTPGEAPGSHSLEDQPHSPEHQLSLSPEPWE) and 84 to 103 (WRRSCQPGVSPGPETQEPEE). Basic and acidic residues predominate over residues 32-41 (SLEDQPHSPE). The region spanning 102–290 (EEKRVVRELL…FSAAQHSNAA (189 aa)) is the DH domain. The region spanning 319-418 (TLLREGPVLK…WMQACQAAID (100 aa)) is the PH 1 domain. An FYVE-type zinc finger spans residues 458 to 518 (DKMVTMCMRC…VCLTCYTFLT (61 aa)). Positions 464, 467, 481, 484, 489, 492, 510, and 513 each coordinate Zn(2+). A PH 2 domain is found at 544–641 (QSLVCSFLQL…WVTAIKRAAS (98 aa)). Residue threonine 644 is modified to Phosphothreonine. A Phosphoserine modification is found at serine 654.

As to expression, lymph node, spleen, B-lymphocytes and macrophages (at protein level). Expressed at high levels in lymph node, spleen, B-lymphocytes and bone marrow macrophages. Expressed at lower levels in mature bone marrow dendritic cells. In both immature and mature B-cells, expression is down-regulated by prior B-cell receptor signaling. Expression remains high in resting B and memory cells but declines upon differentiation into plasma cells.

The protein localises to the cytoplasm. The protein resides in the nucleus. It is found in the early endosome. It localises to the early endosome membrane. Its subcellular location is the cell projection. The protein localises to the ruffle membrane. The protein resides in the cytoskeleton. In terms of biological role, activates CDC42, a member of the Ras-like family of Rho- and Rac proteins, by exchanging bound GDP for free GTP. Activates JNK1 via CDC42 but not RAC1. Binds to phosphatidylinositol 4,5-bisphosphate, phosphatidylinositol 3,4,5-trisphosphate, phosphatidylinositol 5-monophosphate, phosphatidylinositol 4-monophosphate and phosphatidylinositol 3-monophosphate. The chain is FYVE, RhoGEF and PH domain-containing protein 2 (Fgd2) from Mus musculus (Mouse).